A 201-amino-acid polypeptide reads, in one-letter code: Ras-related protein Rab-35 (201 aa).

Gly-18, Val-19, Gly-20, Lys-21, Ser-22, Ser-23, Ser-34, Gly-35, Tyr-37, Thr-39, and Thr-40 together coordinate GTP. Ser-22 is a Mg(2+) binding site. The Switch 1 motif lies at 30 to 42; it reads DNTFSGSYITTIG. Mg(2+) is bound by residues Thr-40 and Asp-63. Positions 64-80 match the Switch 2 motif; that stretch reads TAGQERFRTITSTYYRG. Gly-66 lines the GTP pocket. Thr-72 bears the Phosphothreonine; by LRRK2 mark. Ser-75 is subject to O-(2-cholinephosphoryl)serine. An O-AMP-tyrosine modification is found at Tyr-77. Residues Asn-120, Lys-121, Asp-123, Ala-151, and Lys-152 each contribute to the GTP site. 2 S-geranylgeranyl cysteine lipidation sites follow: Cys-200 and Cys-201.

The protein belongs to the small GTPase superfamily. Rab family. As to quaternary structure, interacts with DENND1A and DENND1B; in a nucleotide-dependent manner. Interacts with DENND1C; weak interaction which is nucleotide-independent. Interacts (GTP-bound form) with ACAP2, RUSC2, OCRL MICAL1 and MICALL1; the interaction is direct and probably recruits these effectors to membranes. Interacts with EHD1; the interaction is indirect through MICALL1 and probably recruits EHD1 to membranes. Interacts with GDI1, GDI2, CHM and CHML; phosphorylation at Thr-72 by LRRK2 disrupts these interactions. Requires Mg(2+) as cofactor. In terms of processing, phosphorylation at Thr-72 by LRRK2 prevents the association of regulatory proteins including CHM, CHML and GDP dissociation inhibitors GDI1 and GDI2. Post-translationally, AMPylation at Tyr-77 by L.pneumophila DrrA occurs in the switch 2 region and leads to moderate inactivation of the GTPase activity. It appears to prolong the lifetime of the GTP state of RAB1B by restricting access of GTPase effectors to switch 2 and blocking effector-stimulated GTP hydrolysis, thereby rendering RAB35 constitutively active. Phosphocholinated by L.pneumophila AnkX. Both GDP-bound and GTP-bound forms can be phosphocholinated. Phosphocholination inhibits the GEF activity of DENND1A.

It localises to the cell membrane. The protein resides in the membrane. It is found in the clathrin-coated pit. The protein localises to the cytoplasmic vesicle. Its subcellular location is the clathrin-coated vesicle. It localises to the endosome. The protein resides in the melanosome. The enzyme catalyses GTP + H2O = GDP + phosphate + H(+). Its activity is regulated as follows. Regulated by guanine nucleotide exchange factors (GEFs) including DENND1A, DENND1B and DENND1C which promote the exchange of bound GDP for free GTP. Regulated by GTPase activating proteins (GAPs) including TBC1D10 and TBC1D13 which increase GTP hydrolysis activity. Inhibited by GDP dissociation inhibitors (GDIs) which prevent Rab-GDP dissociation. In terms of biological role, the small GTPases Rab are key regulators of intracellular membrane trafficking, from the formation of transport vesicles to their fusion with membranes. Rabs cycle between an inactive GDP-bound form and an active GTP-bound form that is able to recruit to membranes different sets of downstream effectors directly responsible for vesicle formation, movement, tethering and fusion. RAB35 is involved in the process of endocytosis and is an essential rate-limiting regulator of the fast recycling pathway back to the plasma membrane. During cytokinesis, required for the postfurrowing terminal steps, namely for intercellular bridge stability and abscission, possibly by controlling phosphatidylinositol 4,5-bis phosphate (PIP2) and SEPT2 localization at the intercellular bridge. May indirectly regulate neurite outgrowth. Together with TBC1D13 may be involved in regulation of insulin-induced glucose transporter SLC2A4/GLUT4 translocation to the plasma membrane in adipocytes. The protein is Ras-related protein Rab-35 of Homo sapiens (Human).